The sequence spans 498 residues: Glutathione hydrolase 6 (498 aa).

The Cytoplasmic segment spans residues 1 to 49 (MDATTGAVLYQKLQLWEPGMESEEEEEEEEIAEPLVLSLRRLQNTPGNK). Residues 50–70 (VGGLPGAWTRLLAGLLLLAVS) form a helical; Signal-anchor for type II membrane protein membrane-spanning segment. The Extracellular segment spans residues 71 to 498 (SSLALRQLQG…PSGCCPFQGY (428 aa)). Residues N162, N167, and N376 are each glycosylated (N-linked (GlcNAc...) asparagine).

The protein belongs to the gamma-glutamyltransferase family. Heterodimer composed of the light and heavy chains. The active site is located in the light chain. In terms of processing, cleaved by autocatalysis into a large and a small subunit and the autocatalytic cleavage is essential to the functional activation of the enzyme.

The protein resides in the membrane. It catalyses the reaction an N-terminal (5-L-glutamyl)-[peptide] + an alpha-amino acid = 5-L-glutamyl amino acid + an N-terminal L-alpha-aminoacyl-[peptide]. The enzyme catalyses glutathione + H2O = L-cysteinylglycine + L-glutamate. The catalysed reaction is an S-substituted glutathione + H2O = an S-substituted L-cysteinylglycine + L-glutamate. It functions in the pathway sulfur metabolism; glutathione metabolism. Hydrolyzes and transfers gamma-glutamyl moieties from glutathione and other gamma-glutamyl compounds to acceptors. The sequence is that of Glutathione hydrolase 6 from Rattus norvegicus (Rat).